Here is a 175-residue protein sequence, read N- to C-terminus: Translation initiation factor IF-3 (175 aa).

Belongs to the IF-3 family. As to quaternary structure, monomer.

The protein localises to the cytoplasm. In terms of biological role, IF-3 binds to the 30S ribosomal subunit and shifts the equilibrium between 70S ribosomes and their 50S and 30S subunits in favor of the free subunits, thus enhancing the availability of 30S subunits on which protein synthesis initiation begins. The chain is Translation initiation factor IF-3 from Staphylococcus aureus (strain NCTC 8325 / PS 47).